The chain runs to 356 residues: Butyrate kinase (356 aa).

The protein belongs to the acetokinase family.

The protein resides in the cytoplasm. It catalyses the reaction butanoate + ATP = butanoyl phosphate + ADP. The protein operates within lipid metabolism; butanoate metabolism. In terms of biological role, catalyzes the conversion of butyryl-CoA through butyryl phosphate to butyrate. This chain is Butyrate kinase, found in Clostridium tetani (strain Massachusetts / E88).